The following is a 73-amino-acid chain: UPF0154 protein LGAS_0795 (73 aa).

The chain crosses the membrane as a helical span at residues 3 to 23 (LGLAIFLIIIALLIGLVGGFY).

Belongs to the UPF0154 family.

The protein resides in the cell membrane. The sequence is that of UPF0154 protein LGAS_0795 from Lactobacillus gasseri (strain ATCC 33323 / DSM 20243 / BCRC 14619 / CIP 102991 / JCM 1131 / KCTC 3163 / NCIMB 11718 / NCTC 13722 / AM63).